An 893-amino-acid polypeptide reads, in one-letter code: Alanine--tRNA ligase (893 aa).

4 residues coordinate Zn(2+): H575, H579, C677, and H681.

The protein belongs to the class-II aminoacyl-tRNA synthetase family. Zn(2+) is required as a cofactor.

It localises to the cytoplasm. It catalyses the reaction tRNA(Ala) + L-alanine + ATP = L-alanyl-tRNA(Ala) + AMP + diphosphate. Functionally, catalyzes the attachment of alanine to tRNA(Ala) in a two-step reaction: alanine is first activated by ATP to form Ala-AMP and then transferred to the acceptor end of tRNA(Ala). Also edits incorrectly charged Ser-tRNA(Ala) and Gly-tRNA(Ala) via its editing domain. The protein is Alanine--tRNA ligase of Synechococcus sp. (strain CC9311).